A 290-amino-acid chain; its full sequence is Tubulin beta-4B chain (290 aa).

An MREI motif motif is present at residues 1–4 (MREI). Residue glutamine 11 coordinates GTP. Position 55 is a phosphothreonine (threonine 55). Lysine 58 is subject to N6-acetyllysine. 6 residues coordinate GTP: glutamate 69, serine 138, glycine 142, threonine 143, glycine 144, and asparagine 172. A Mg(2+)-binding site is contributed by glutamate 69.

The protein belongs to the tubulin family. In terms of assembly, dimer of alpha and beta chains. A typical microtubule is a hollow water-filled tube with an outer diameter of 25 nm and an inner diameter of 15 nM. Alpha-beta heterodimers associate head-to-tail to form protofilaments running lengthwise along the microtubule wall with the beta-tubulin subunit facing the microtubule plus end conferring a structural polarity. Microtubules usually have 13 protofilaments but different protofilament numbers can be found in some organisms and specialized cells. Component of sperm flagellar doublet microtubules. Mg(2+) is required as a cofactor. In terms of processing, some glutamate residues at the C-terminus are polyglycylated, resulting in polyglycine chains on the gamma-carboxyl group. Glycylation is mainly limited to tubulin incorporated into axonemes (cilia and flagella) whereas glutamylation is prevalent in neuronal cells, centrioles, axonemes, and the mitotic spindle. Both modifications can coexist on the same protein on adjacent residues, and lowering polyglycylation levels increases polyglutamylation, and reciprocally. Cilia and flagella glycylation is required for their stability and maintenance. Flagella glycylation controls sperm motility. Post-translationally, some glutamate residues at the C-terminus are polyglutamylated, resulting in polyglutamate chains on the gamma-carboxyl group. Polyglutamylation plays a key role in microtubule severing by spastin (SPAST). SPAST preferentially recognizes and acts on microtubules decorated with short polyglutamate tails: severing activity by SPAST increases as the number of glutamates per tubulin rises from one to eight, but decreases beyond this glutamylation threshold. Glutamylation is also involved in cilia motility.

The protein localises to the cytoplasm. It localises to the cytoskeleton. Its subcellular location is the flagellum axoneme. Its function is as follows. Tubulin is the major constituent of microtubules, a cylinder consisting of laterally associated linear protofilaments composed of alpha- and beta-tubulin heterodimers. Microtubules grow by the addition of GTP-tubulin dimers to the microtubule end, where a stabilizing cap forms. Below the cap, tubulin dimers are in GDP-bound state, owing to GTPase activity of alpha-tubulin. The protein is Tubulin beta-4B chain (TUBB4B) of Mesocricetus auratus (Golden hamster).